Reading from the N-terminus, the 453-residue chain is Presenilin-like protein At1g08700 (453 aa).

The Cytoplasmic portion of the chain corresponds to 1 to 8; sequence MESSILDS. A helical membrane pass occupies residues 9-29; the sequence is LGVEIIGVMAPVSICMFLVVL. Over 30–68 the chain is Lumenal; it reads LTYSLSVTSDPQIRSAANLIYIENPSDSTTVKLEGSLAN. The chain crosses the membrane as a helical span at residues 69–89; that stretch reads AIVFVVLIAAVTFILVLLFYY. The Cytoplasmic segment spans residues 90–103; it reads NFTNFLKHYMRFSA. A helical transmembrane segment spans residues 104–124; that stretch reads FFVLGTMGGAIFLSIIQHFSI. At 125–132 the chain is on the lumenal side; the sequence is PVDSITCF. A helical membrane pass occupies residues 133 to 153; it reads ILLFNFTILGTLSVFAGGIPI. Topologically, residues 154-159 are cytoplasmic; the sequence is VLRQCY. 2 consecutive transmembrane segments (helical) span residues 160–180 and 181–201; these read MVVMGIVVAAWFTKLPEWTTW and FILVALALYDLVAVLAPGGPL. Asp-190 is an active-site residue. Residues 202 to 369 lie on the Cytoplasmic side of the membrane; it reads KLLVELASSR…VVDISNRGIK (168 aa). 2 disordered regions span residues 226-248 and 292-329; these read VSSGNQRRNRGSSLRALVGGGGV and IGNGSRGGLERSPLVGSPSASEHSTSVGTRGNMEDRES. Low complexity predominate over residues 227-240; that stretch reads SSGNQRRNRGSSLR. Residue Ser-296 is modified to Phosphoserine. The span at 309 to 320 shows a compositional bias: polar residues; that stretch reads PSASEHSTSVGT. A helical membrane pass occupies residues 370 to 390; it reads LGLGDFIFYSVLVGRAAMYDL. Asp-374 is a catalytic residue. Residues 391–392 are Lumenal-facing; that stretch reads MT. Residues 393-413 traverse the membrane as a helical segment; it reads VYACYLAIISGLGCTLILLSV. Residues 414–417 are Cytoplasmic-facing; that stretch reads YNRA. The segment at residues 418–438 is an intramembrane region (helical); the sequence is LPALPISIMLGVVFYFLTRLL. Residues 419–421 carry the PAL motif; the sequence is PAL. Topologically, residues 439-453 are cytoplasmic; that stretch reads MEPFVVGVTTNLMMF.

Belongs to the peptidase A22A family. Homodimer. Probable component of the gamma-secretase complex, a complex composed of a presenilin homodimer, nicastrin, APH1 and PEN2.

Its subcellular location is the endoplasmic reticulum membrane. It localises to the golgi apparatus membrane. Probable subunit of the gamma-secretase complex, an endoprotease complex that catalyzes the intramembrane cleavage of integral membrane proteins such as Notch receptors. The protein is Presenilin-like protein At1g08700 of Arabidopsis thaliana (Mouse-ear cress).